Consider the following 858-residue polypeptide: Bifunctional uridylyltransferase/uridylyl-removing enzyme (858 aa).

The uridylyltransferase stretch occupies residues 1 to 324 (MSASVAEPPP…PATSGVTRVL (324 aa)). The uridylyl-removing stretch occupies residues 325–681 (SPGRFVEKQG…ARPSPVGDAL (357 aa)). One can recognise an HD domain in the interval 443–565 (VDQHILMVLR…VGSERRLTAL (123 aa)). 2 ACT domains span residues 682–761 (QVLV…PEPS) and 790–858 (ILSV…AIAV).

The protein belongs to the GlnD family. Mg(2+) serves as cofactor.

The catalysed reaction is [protein-PII]-L-tyrosine + UTP = [protein-PII]-uridylyl-L-tyrosine + diphosphate. It carries out the reaction [protein-PII]-uridylyl-L-tyrosine + H2O = [protein-PII]-L-tyrosine + UMP + H(+). With respect to regulation, uridylyltransferase (UTase) activity is inhibited by glutamine, while glutamine activates uridylyl-removing (UR) activity. Its function is as follows. Modifies, by uridylylation and deuridylylation, the PII regulatory proteins (GlnB and homologs), in response to the nitrogen status of the cell that GlnD senses through the glutamine level. Under low glutamine levels, catalyzes the conversion of the PII proteins and UTP to PII-UMP and PPi, while under higher glutamine levels, GlnD hydrolyzes PII-UMP to PII and UMP (deuridylylation). Thus, controls uridylylation state and activity of the PII proteins, and plays an important role in the regulation of nitrogen assimilation and metabolism. This Burkholderia mallei (strain NCTC 10247) protein is Bifunctional uridylyltransferase/uridylyl-removing enzyme.